We begin with the raw amino-acid sequence, 333 residues long: 4-hydroxyproline epimerase (333 aa).

The active-site Proton acceptor is the Cys-90. Residues Gly-91–His-92 and Asp-249 each bind substrate. The active-site Proton donor is Cys-253. Substrate is bound at residue Gly-254–Thr-255.

This sequence belongs to the proline racemase family. In terms of assembly, homodimer.

The enzyme catalyses trans-4-hydroxy-L-proline = cis-4-hydroxy-D-proline. Functionally, allows intracellular utilization of 4-hydroxyproline, one of the major constituents of host collagen, by converting 4-hydroxy-L-proline to 4-hydroxy-D-proline, which can be further metabolized by intracellular 4-hydroxy-D-proline oxidases. Strong B-cell mitogen. Plays an important role in the regulation of intra- and extracellular amino acid pools, allowing the bacterium to profit from host precursors and enzymatic pathways. The protein is 4-hydroxyproline epimerase of Brucella suis (strain ATCC 23445 / NCTC 10510).